A 230-amino-acid polypeptide reads, in one-letter code: Small ribosomal subunit protein uS3c (230 aa).

Residues 39-109 (IRSFIHSKLS…QLRVNVVEIA (71 aa)) form the KH type-2 domain.

It belongs to the universal ribosomal protein uS3 family. Part of the 30S ribosomal subunit.

It is found in the plastid. The protein localises to the chloroplast. The chain is Small ribosomal subunit protein uS3c (rps3) from Pyropia yezoensis (Susabi-nori).